A 135-amino-acid chain; its full sequence is Type 3 secretion system stator protein (135 aa).

This sequence belongs to the SctL stator family. The core secretion machinery of the T3SS is composed of approximately 20 different proteins, including cytoplasmic components, a base, an export apparatus and a needle. This subunit is part of the cytosolic complex.

The protein resides in the cytoplasm. Component of the type III secretion system (T3SS), also called injectisome, which is used to inject bacterial effector proteins into eukaryotic host cells. Acts as a regulator of the HrcN/SctN ATPase activity. This chain is Type 3 secretion system stator protein, found in Rhizobium fredii (Sinorhizobium fredii).